We begin with the raw amino-acid sequence, 125 residues long: Probable 4-amino-4-deoxy-L-arabinose-phosphoundecaprenol flippase subunit ArnF (125 aa).

Residues 1 to 2 (MG) lie on the Cytoplasmic side of the membrane. Residues 3–23 (VMWGLISVAIASLAQLSLGFA) form a helical membrane-spanning segment. The Periplasmic portion of the chain corresponds to 24 to 33 (MMRLPSIAHP). A helical transmembrane segment spans residues 34 to 54 (LAFISGLGAFNAATLALFAGL). At 55–76 (AGYLVSVFCWQKTLHMLALSKA) the chain is on the cytoplasmic side. A helical transmembrane segment spans residues 77-97 (YALLSLSYVLVWVASMLLPGL). The Periplasmic segment spans residues 98–100 (QGA). Residues 101-121 (FSLKAMLGVLCIMAGVMLIFL) traverse the membrane as a helical segment. The Cytoplasmic segment spans residues 122-125 (PARS).

Belongs to the ArnF family. As to quaternary structure, heterodimer of ArnE and ArnF.

The protein localises to the cell inner membrane. The protein operates within bacterial outer membrane biogenesis; lipopolysaccharide biosynthesis. Functionally, translocates 4-amino-4-deoxy-L-arabinose-phosphoundecaprenol (alpha-L-Ara4N-phosphoundecaprenol) from the cytoplasmic to the periplasmic side of the inner membrane. In Salmonella paratyphi A (strain ATCC 9150 / SARB42), this protein is Probable 4-amino-4-deoxy-L-arabinose-phosphoundecaprenol flippase subunit ArnF.